Reading from the N-terminus, the 260-residue chain is Crotonyl-CoA hydratase (260 aa).

Glu-114 functions as the Nucleophile in the catalytic mechanism. The active-site Proton acceptor is the Glu-134.

It belongs to the enoyl-CoA hydratase/isomerase family. In terms of assembly, homotetramer.

The protein resides in the cytoplasm. The enzyme catalyses 3-hydroxybutanoyl-CoA = (2E)-butenoyl-CoA + H2O. It carries out the reaction a short-chain (3S)-3-hydroxyacyl-CoA = a short-chain (2E)-enoyl-CoA + H2O. Its pathway is lipid metabolism; butanoate metabolism. Functionally, involved in syntrophic growth of S.wolfei with butyrate, as part of the butyrate oxidation pathway. Probably catalyzes the hydration of crotonyl-CoA to 3-hydroxybutyryl-CoA. The protein is Crotonyl-CoA hydratase of Syntrophomonas wolfei subsp. wolfei (strain DSM 2245B / Goettingen).